The chain runs to 439 residues: tRNA-2-methylthio-N(6)-dimethylallyladenosine synthase (439 aa).

One can recognise an MTTase N-terminal domain in the interval 2–119 (KKLYLKTHGC…LPDLLDSVIQ (118 aa)). [4Fe-4S] cluster is bound by residues C11, C48, C82, C156, C160, and C163. The Radical SAM core domain maps to 142–374 (RAEGPSAFVS…QNRINAKAAE (233 aa)). A TRAM domain is found at 377 to 439 (QSMVGTQQRI…RPYSLWGEIC (63 aa)).

The protein belongs to the methylthiotransferase family. MiaB subfamily. Monomer. [4Fe-4S] cluster serves as cofactor.

The protein localises to the cytoplasm. It carries out the reaction N(6)-dimethylallyladenosine(37) in tRNA + (sulfur carrier)-SH + AH2 + 2 S-adenosyl-L-methionine = 2-methylsulfanyl-N(6)-dimethylallyladenosine(37) in tRNA + (sulfur carrier)-H + 5'-deoxyadenosine + L-methionine + A + S-adenosyl-L-homocysteine + 2 H(+). Its function is as follows. Catalyzes the methylthiolation of N6-(dimethylallyl)adenosine (i(6)A), leading to the formation of 2-methylthio-N6-(dimethylallyl)adenosine (ms(2)i(6)A) at position 37 in tRNAs that read codons beginning with uridine. This is tRNA-2-methylthio-N(6)-dimethylallyladenosine synthase from Coxiella burnetii (strain CbuK_Q154) (Coxiella burnetii (strain Q154)).